The primary structure comprises 371 residues: Fe(3+) ions import ATP-binding protein FbpC (371 aa).

Residues 5–235 (IKIENAQKRY…PANLFVATFI (231 aa)) enclose the ABC transporter domain. 37 to 44 (GPSGCGKT) contacts ATP.

It belongs to the ABC transporter superfamily. Fe(3+) ion importer (TC 3.A.1.10) family. As to quaternary structure, the complex is composed of two ATP-binding proteins (FbpC), two transmembrane proteins (FbpB) and a solute-binding protein (FbpA).

Its subcellular location is the cell inner membrane. The enzyme catalyses Fe(3+)(out) + ATP + H2O = Fe(3+)(in) + ADP + phosphate + H(+). In terms of biological role, part of the ABC transporter complex FbpABC involved in Fe(3+) ions import. Responsible for energy coupling to the transport system. The chain is Fe(3+) ions import ATP-binding protein FbpC from Fusobacterium nucleatum subsp. nucleatum (strain ATCC 25586 / DSM 15643 / BCRC 10681 / CIP 101130 / JCM 8532 / KCTC 2640 / LMG 13131 / VPI 4355).